The primary structure comprises 65 residues: Large ribosomal subunit protein bL35 (65 aa).

It belongs to the bacterial ribosomal protein bL35 family.

In Synechococcus sp. (strain CC9605), this protein is Large ribosomal subunit protein bL35.